Reading from the N-terminus, the 795-residue chain is Delta-1-pyrroline-5-carboxylate synthase (795 aa).

The glutamate 5-kinase stretch occupies residues 1-361 (MLSQVYRCGF…FFSEVKPAGP (361 aa)). Substrate contacts are provided by serine 117, aspartate 223, and asparagine 246. ATP-binding positions include 266–267 (SD) and 305–311 (MGGMEAK). N6-succinyllysine is present on residues lysine 311, lysine 347, and lysine 550. The tract at residues 362-795 (TVEQQGEMAR…NLPIPQRNTN (434 aa)) is gamma-glutamyl phosphate reductase.

The protein in the N-terminal section; belongs to the glutamate 5-kinase family. This sequence in the C-terminal section; belongs to the gamma-glutamyl phosphate reductase family. In terms of assembly, can form homodimers/multimers.

Its subcellular location is the mitochondrion. It is found in the mitochondrion matrix. The catalysed reaction is L-glutamate + ATP = L-glutamyl 5-phosphate + ADP. It carries out the reaction L-glutamate 5-semialdehyde + phosphate + NADP(+) = L-glutamyl 5-phosphate + NADPH + H(+). It participates in amino-acid biosynthesis; L-proline biosynthesis; L-glutamate 5-semialdehyde from L-glutamate: step 1/2. The protein operates within amino-acid biosynthesis; L-proline biosynthesis; L-glutamate 5-semialdehyde from L-glutamate: step 2/2. With respect to regulation, isoform Short: Inhibited by L-ornithine with a Ki of approximately 0.25 mm. Isoform Long: Insensitive to ornithine inhibition. This is due to the two amino acid insert which abolishes feedback inhibition of P5CS activity by L-ornithine. In terms of biological role, bifunctional enzyme that converts glutamate to glutamate 5-semialdehyde, an intermediate in the biosynthesis of proline, ornithine and arginine. In Homo sapiens (Human), this protein is Delta-1-pyrroline-5-carboxylate synthase (ALDH18A1).